The following is a 293-amino-acid chain: Glutamyl-Q tRNA(Asp) synthetase (293 aa).

Residues 9 to 13 and E45 contribute to the L-glutamate site; that span reads RFAPS. A 'HIGH' region motif is present at residues 12 to 22; sequence PSPSGELHFGS. Zn(2+) contacts are provided by C101, C103, Y115, and C119. 2 residues coordinate L-glutamate: Y172 and R190. The 'KMSKS' region signature appears at 228–232; it reads KLSKQ. K231 contributes to the ATP binding site.

Belongs to the class-I aminoacyl-tRNA synthetase family. GluQ subfamily. Requires Zn(2+) as cofactor.

Its function is as follows. Catalyzes the tRNA-independent activation of glutamate in presence of ATP and the subsequent transfer of glutamate onto a tRNA(Asp). Glutamate is transferred on the 2-amino-5-(4,5-dihydroxy-2-cyclopenten-1-yl) moiety of the queuosine in the wobble position of the QUC anticodon. In Klebsiella pneumoniae (strain 342), this protein is Glutamyl-Q tRNA(Asp) synthetase.